The primary structure comprises 409 residues: ATPase ASNA1 homolog (409 aa).

21–28 (KGGVGKTT) serves as a coordination point for ATP. The active site involves Asp-62. Positions 303 and 330 each coordinate ATP. Residues Cys-342 and Cys-345 each contribute to the Zn(2+) site.

Belongs to the arsA ATPase family. In terms of assembly, homodimer.

The protein resides in the cytoplasm. It is found in the endoplasmic reticulum. ATPase required for the post-translational delivery of tail-anchored (TA) proteins to the endoplasmic reticulum. Recognizes and selectively binds the transmembrane domain of TA proteins in the cytosol. This complex then targets to the endoplasmic reticulum by membrane-bound receptors, where the tail-anchored protein is released for insertion. This process is regulated by ATP binding and hydrolysis. ATP binding drives the homodimer towards the closed dimer state, facilitating recognition of newly synthesized TA membrane proteins. ATP hydrolysis is required for insertion. Subsequently, the homodimer reverts towards the open dimer state, lowering its affinity for the membrane-bound receptor, and returning it to the cytosol to initiate a new round of targeting. This is ATPase ASNA1 homolog from Leishmania major.